Reading from the N-terminus, the 82-residue chain is Beta-neurotoxin Css9 (82 aa).

Residues 1-17 form the signal peptide; the sequence is MKLLMLIVALMIIGVQS. One can recognise an LCN-type CS-alpha/beta domain in the interval 18-81; sequence KDGYPMDHKG…VWDRATNKCR (64 aa). Cystine bridges form between C28-C80, C32-C54, C39-C61, and C43-C63.

It belongs to the long (4 C-C) scorpion toxin superfamily. Sodium channel inhibitor family. Beta subfamily. As to expression, expressed by the venom gland.

It localises to the secreted. Its function is as follows. Beta toxins bind voltage-independently at site-4 of sodium channels (Nav) and shift the voltage of activation toward more negative potentials thereby affecting sodium channel activation and promoting spontaneous and repetitive firing. This toxin compete with high affinity with 125I-Css4 bound on rat brain synaptosome and may bind with high affinity to Nav1.1/SCN1A, Nav1.2/SCN2A and Nav1.6/SCN8A. The chain is Beta-neurotoxin Css9 from Centruroides suffusus (Durango bark scorpion).